A 953-amino-acid polypeptide reads, in one-letter code: ALS2 C-terminal-like protein (953 aa).

MORN repeat units lie at residues 358-380, 381-403, 409-431, 432-454, 459-481, 483-505, 506-528, and 529-552; these read YEGE…DGRN, HVGD…QASE, YKCH…TSEV, YKGY…PQAP, YTGH…DRGE, YIGM…AGVC, YQGT…DDSL, and YEGT…NGFT. The VPS9 domain occupies 796 to 942; the sequence is LFPDARLLEF…IQKEDMRLHR (147 aa).

In terms of assembly, homodimer. Forms a heteromeric complex with ALS2. Interacts with ALS2 and RAB5A.

The protein localises to the cytoplasm. Its function is as follows. Acts as a guanine nucleotide exchange factor (GEF) for Rab5 GTPase. Regulates the ALS2-mediated endosome dynamics. This is ALS2 C-terminal-like protein (ALS2CL) from Bos taurus (Bovine).